A 357-amino-acid chain; its full sequence is D(4) dopamine receptor (357 aa).

Residues 1 to 32 lie on the Extracellular side of the membrane; it reads MGNRSAADADGLLAGRGPGTGGGAGSPGAAAA. The N-linked (GlcNAc...) asparagine glycan is linked to Asn-3. Residues 33-55 traverse the membrane as a helical segment; the sequence is LVGGVLLIGAVLAGNALVCVSVA. The Cytoplasmic segment spans residues 56 to 65; the sequence is AERALQTPTN. The helical transmembrane segment at 66 to 88 threads the bilayer; the sequence is YFIVSLAAADLLLALLVLPLFVY. Asp-75 contributes to the Na(+) binding site. The Extracellular segment spans residues 89-104; the sequence is SEVQGGVWQFSPGLCD. A disulfide bridge connects residues Cys-103 and Cys-180. A helical membrane pass occupies residues 105 to 126; sequence ALMAMDVMLCTASIFNLCAISA. Ser-117 serves as a coordination point for Na(+). The Cytoplasmic portion of the chain corresponds to 127–146; that stretch reads DRFVAVAVPLSYNRQSGGGR. The chain crosses the membrane as a helical span at residues 147-170; it reads QLLLIGATWLLSAAVAAPVLCGLN. The Extracellular portion of the chain corresponds to 171 to 186; that stretch reads DARGRDPAVCRLEDRD. Residues 187-208 form a helical membrane-spanning segment; it reads YVVYSSVCSFFLPCPVMLLLYW. The Cytoplasmic segment spans residues 209–284; sequence ATFRGLRRWE…ITGRERKAMR (76 aa). The segment at 225–261 is disordered; the sequence is LHGRRPRRPSGPGPPPPEAVETPEAPEAIPTPDATLA. Over residues 233–242 the composition is skewed to pro residues; it reads PSGPGPPPPE. Over residues 243–259 the composition is skewed to low complexity; that stretch reads AVETPEAPEAIPTPDAT. A helical transmembrane segment spans residues 285–307; it reads VLPVVVGAFLVCWTPFFVVHITG. The Extracellular segment spans residues 308–316; sequence ALCPACAVP. A disulfide bridge links Cys-310 with Cys-313. Residues 317-339 traverse the membrane as a helical segment; that stretch reads PRLVSAVTWLGYVNSALNPLIYT. Residues 340–357 lie on the Cytoplasmic side of the membrane; it reads VFNAEFRAVFRKALRLCC. The S-palmitoyl cysteine moiety is linked to residue Cys-357.

This sequence belongs to the G-protein coupled receptor 1 family. In terms of assembly, forms homo- and heterooligomers with DRD2. D4.7 allele exhibits higher affinity for homodimers compared to DRD2 heterodimers, while alleles D42. and 4.4 have similar affinities for both. The interaction with DRD2 may modulate agonist-induced downstream signaling. Interacts with CLIC6. Interacts with GPRASP1. May interact with ADORA2A. Interacts with KLHL12. In terms of processing, polyubiquitinated by the BCR(KLHL12) E3 ubiquitin ligase complex: polyubiquitination does not lead to degradation of DRD4 protein. Post-translationally, palmitoylated. Palmitoylation of the C-terminal Cys is important for normal expression at the cell membrane.

Its subcellular location is the cell membrane. Its function is as follows. Dopamine receptor responsible for neuronal signaling in the mesolimbic system of the brain, an area of the brain that regulates emotion and complex behavior. Activated by dopamine, but also by epinephrine and norepinephrine, and by numerous synthetic agonists and drugs. Agonist binding triggers signaling via G proteins that inhibit adenylyl cyclase. Modulates the circadian rhythm of contrast sensitivity by regulating the rhythmic expression of NPAS2 in the retinal ganglion cells. This Mustela putorius furo (European domestic ferret) protein is D(4) dopamine receptor (DRD4).